A 124-amino-acid chain; its full sequence is Small ribosomal subunit protein bS6 (124 aa).

The tract at residues 100–124 (KERRAARQKTGETQENVSQEESSTN) is disordered. A compositionally biased stretch (polar residues) spans 110 to 124 (GETQENVSQEESSTN).

This sequence belongs to the bacterial ribosomal protein bS6 family.

Functionally, binds together with bS18 to 16S ribosomal RNA. The protein is Small ribosomal subunit protein bS6 of Fervidobacterium nodosum (strain ATCC 35602 / DSM 5306 / Rt17-B1).